A 303-amino-acid polypeptide reads, in one-letter code: Acetaldehyde dehydrogenase 1 (303 aa).

Catalysis depends on Cys130, which acts as the Acyl-thioester intermediate. NAD(+)-binding positions include 161–169 (SVGPGTRKN) and Asn272.

Belongs to the acetaldehyde dehydrogenase family.

It catalyses the reaction acetaldehyde + NAD(+) + CoA = acetyl-CoA + NADH + H(+). This chain is Acetaldehyde dehydrogenase 1, found in Cupriavidus metallidurans (strain ATCC 43123 / DSM 2839 / NBRC 102507 / CH34) (Ralstonia metallidurans).